The following is a 205-amino-acid chain: Imidazole glycerol phosphate synthase subunit HisH (205 aa).

Positions 1-205 (MIALVDYGGG…FFKMALGDKK (205 aa)) constitute a Glutamine amidotransferase type-1 domain. Cys-79 (nucleophile) is an active-site residue. Active-site residues include His-181 and Glu-183.

As to quaternary structure, heterodimer of HisH and HisF.

Its subcellular location is the cytoplasm. It catalyses the reaction 5-[(5-phospho-1-deoxy-D-ribulos-1-ylimino)methylamino]-1-(5-phospho-beta-D-ribosyl)imidazole-4-carboxamide + L-glutamine = D-erythro-1-(imidazol-4-yl)glycerol 3-phosphate + 5-amino-1-(5-phospho-beta-D-ribosyl)imidazole-4-carboxamide + L-glutamate + H(+). The enzyme catalyses L-glutamine + H2O = L-glutamate + NH4(+). It functions in the pathway amino-acid biosynthesis; L-histidine biosynthesis; L-histidine from 5-phospho-alpha-D-ribose 1-diphosphate: step 5/9. Its function is as follows. IGPS catalyzes the conversion of PRFAR and glutamine to IGP, AICAR and glutamate. The HisH subunit catalyzes the hydrolysis of glutamine to glutamate and ammonia as part of the synthesis of IGP and AICAR. The resulting ammonia molecule is channeled to the active site of HisF. The polypeptide is Imidazole glycerol phosphate synthase subunit HisH (Dehalococcoides mccartyi (strain CBDB1)).